The following is a 385-amino-acid chain: Taurine hydroxylase-like protein SAT17 (385 aa).

Its pathway is mycotoxin biosynthesis. Its function is as follows. Taurine hydroxylase-like protein; part of the satratoxin SC3 cluster involved in the biosynthesis of satratoxins, trichothecene mycotoxins that are associated with human food poisonings. Satratoxins are suggested to be made by products of multiple gene clusters (SC1, SC2 and SC3) that encode 21 proteins in all, including polyketide synthases, acetyltransferases, and other enzymes expected to modify the trichothecene skeleton. SC1 encodes 10 proteins, SAT1 to SAT10. The largest are SAT8, which encodes a putative polyketide synthase (PKS) with a conventional non-reducing architecture, and SAT10, a putative protein containing four ankyrin repeats and thus may be involved in protein scaffolding. The putative short-chain reductase SAT3 may assist the PKS in some capacity. SAT6 contains a secretory lipase domain and acts probably as a trichothecene esterase. SAT5 encodes a putative acetyltransferase, and so, with SAT6, may affect endogenous protection from toxicity. The probable transcription factor SAT9 may regulate the expression of the SC1 cluster. SC2 encodes proteins SAT11 to SAT16, the largest of which encodes the putative reducing PKS SAT13. SAT11 is a cytochrome P450 monooxygenase, while SAT14 and SAT16 are probable acetyltransferases. The SC2 cluster may be regulated by the transcription factor SAT15. SC3 is a small cluster that encodes 5 proteins, SAT17 to SAT21. SAT21 is a putative MFS-type transporter which may have a role in exporting secondary metabolites. The four other proteins putatively encoded in SC3 include the taurine hydroxylase-like protein SAT17, the O-methyltransferase SAT18, the acetyltransferase SAT19, and the Cys6-type zinc finger SAT20, the latter being probably involved in regulation of SC3 expression. This Stachybotrys chartarum (strain CBS 109288 / IBT 7711) (Toxic black mold) protein is Taurine hydroxylase-like protein SAT17.